Consider the following 311-residue polypeptide: Pyrimidine-specific ribonucleoside hydrolase RihA (311 aa).

The active site involves histidine 240.

It belongs to the IUNH family. RihA subfamily.

Its function is as follows. Hydrolyzes cytidine or uridine to ribose and cytosine or uracil, respectively. This is Pyrimidine-specific ribonucleoside hydrolase RihA from Salmonella paratyphi A (strain ATCC 9150 / SARB42).